A 336-amino-acid chain; its full sequence is Homoserine O-acetyltransferase (336 aa).

The AB hydrolase-1 domain occupies 58 to 321 (AILVLHALTG…PHGHDAFLID (264 aa)). The active-site Nucleophile is the serine 147. Substrate is bound at residue arginine 204. Residues aspartate 286 and histidine 315 contribute to the active site. Aspartate 316 lines the substrate pocket.

The protein belongs to the AB hydrolase superfamily. MetX family. As to quaternary structure, homodimer.

The protein resides in the cytoplasm. It carries out the reaction L-homoserine + acetyl-CoA = O-acetyl-L-homoserine + CoA. The protein operates within amino-acid biosynthesis; L-methionine biosynthesis via de novo pathway; O-acetyl-L-homoserine from L-homoserine: step 1/1. In terms of biological role, transfers an acetyl group from acetyl-CoA to L-homoserine, forming acetyl-L-homoserine. The protein is Homoserine O-acetyltransferase of Deinococcus geothermalis (strain DSM 11300 / CIP 105573 / AG-3a).